The chain runs to 439 residues: Protein ABHD8 (439 aa).

Disordered regions lie at residues 54–75 (HAGP…PGVK) and 122–148 (ELAE…RPKR). The segment covering 58-67 (APIPTPPPPP) has biased composition (pro residues). Basic residues predominate over residues 138 to 148 (GRRRRPRRPKR). Residues 169–271 (VLFFIHGVGG…HKVIMINGGG (103 aa)) enclose the AB hydrolase-1 domain. Active-site charge relay system residues include Ser244, Asp362, and His390. Residues 415–439 (EAEPKLEPKPKPQLLQPEPAPGEEK) are disordered.

This sequence belongs to the AB hydrolase superfamily. As to quaternary structure, interacts with NLRP3 (via NACHT and LLR domains); this interaction is enhanced in the presence of NLRP3 inflammasome inducers, such as ATP, nigericin, silica, or alum. Interacts with ZDHHC12.

The protein resides in the cytoplasm. Its function is as follows. Negatively regulates NLRP3-driven inflammation. Promotes NLRP3 degradation through the chaperone-mediated autophagy (CMA) pathway, hence attenuating inflammasome activation and IL1B secretion. Acts by recruiting palmitoyltransferase ZDHHC12 to NLRP3, facilitating NLRP3 palmitoylation and subsequent degradation. This chain is Protein ABHD8, found in Mus musculus (Mouse).